A 512-amino-acid chain; its full sequence is Inositol-3-phosphate synthase (512 aa).

NAD(+)-binding residues include Gly72, Gly73, Asn74, Asn75, Asp145, Ile182, Gln192, Arg195, Thr232, Gly233, Asn234, Thr235, Gly283, Ser284, Asp308, Ser311, Asn342, Asn343, Asp344, Lys357, Gly395, Asp396, Asp424, and Ser425.

Belongs to the myo-inositol 1-phosphate synthase family. The cofactor is NAD(+).

Its subcellular location is the cytoplasm. The protein localises to the cytosol. The protein resides in the nucleus. The enzyme catalyses D-glucose 6-phosphate = 1D-myo-inositol 3-phosphate. It participates in polyol metabolism; myo-inositol biosynthesis; myo-inositol from D-glucose 6-phosphate: step 1/2. Functionally, key enzyme in myo-inositol biosynthesis pathway that catalyzes the conversion of glucose 6-phosphate to 1-myo-inositol 1-phosphate in a NAD-dependent manner. The chain is Inositol-3-phosphate synthase from Mesembryanthemum crystallinum (Common ice plant).